A 203-amino-acid polypeptide reads, in one-letter code: Small ribosomal subunit protein uS4c (203 aa).

A disordered region spans residues 15–42; sequence LGALPGLTSKRPRAGSDPRNQELSGNKS. Positions 89–150 constitute an S4 RNA-binding domain; that stretch reads MRLDNILFRL…DQKSKAMIQN (62 aa).

This sequence belongs to the universal ribosomal protein uS4 family. Part of the 30S ribosomal subunit. Contacts protein S5. The interaction surface between S4 and S5 is involved in control of translational fidelity.

The protein localises to the plastid. It is found in the chloroplast. Functionally, one of the primary rRNA binding proteins, it binds directly to 16S rRNA where it nucleates assembly of the body of the 30S subunit. In terms of biological role, with S5 and S12 plays an important role in translational accuracy. This chain is Small ribosomal subunit protein uS4c (rps4), found in Oenothera elata subsp. hookeri (Hooker's evening primrose).